We begin with the raw amino-acid sequence, 235 residues long: Uridylate kinase (235 aa).

An ATP-binding site is contributed by 10 to 11; it reads GS. Gly-45 lines the UMP pocket. The ATP site is built by Gly-46 and Arg-50. UMP-binding positions include Asp-67 and 115-121; that span reads VTPGQTT. Residues Thr-141, Tyr-147, and Asp-150 each coordinate ATP.

It belongs to the UMP kinase family. As to quaternary structure, homohexamer.

The protein resides in the cytoplasm. The catalysed reaction is UMP + ATP = UDP + ADP. Its pathway is pyrimidine metabolism; CTP biosynthesis via de novo pathway; UDP from UMP (UMPK route): step 1/1. Inhibited by UTP. Catalyzes the reversible phosphorylation of UMP to UDP. The chain is Uridylate kinase from Methanocorpusculum labreanum (strain ATCC 43576 / DSM 4855 / Z).